Here is a 263-residue protein sequence, read N- to C-terminus: MDTLTSAPLLTSKFKPSFSPQQKPCFPHRRRFENGKKKQSIVPVARLFGPAIFEASKLKVLFLGIDENKHPGNLPRTYTLTHSDVTSKLTLAISQTINNSQLQGWYNRLQRDEVVAQWKKVKGKMSLHVHCHISGGHFLLDIFARLRYFIFCKELPVVLKAFVHGDGNLFNNYPELEESLVWVFFHSKILIREFNKVECWGPLKEASQPTSGTHSDLKLPQSCEEDCECCFPPLNLSPIPCSNEVINNTYEPIDGIGTQHGNL.

The N-terminal 54 residues, 1–54 (MDTLTSAPLLTSKFKPSFSPQQKPCFPHRRRFENGKKKQSIVPVARLFGPAIFE), are a transit peptide targeting the chloroplast.

The protein belongs to the staygreen family.

It localises to the plastid. The protein localises to the chloroplast. Its function is as follows. Non-functional protein probably interfering with the disassembling mechanism of the intact light-harvesting complex of photosystem II (LHCII) in the thylakoid membranes. Responsible for a stay-green phenotype. This is Non-functional protein STAY-GREEN, chloroplastic (SGR) from Pisum sativum (Garden pea).